A 179-amino-acid chain; its full sequence is ATP synthase subunit b, chloroplastic (179 aa).

The chain crosses the membrane as a helical span at residues 28–46; sequence LLNILALVAILVYTGKDFL.

Belongs to the ATPase B chain family. F-type ATPases have 2 components, F(1) - the catalytic core - and F(0) - the membrane proton channel. F(1) has five subunits: alpha(3), beta(3), gamma(1), delta(1), epsilon(1). F(0) has four main subunits: a(1), b(1), b'(1) and c(10-14). The alpha and beta chains form an alternating ring which encloses part of the gamma chain. F(1) is attached to F(0) by a central stalk formed by the gamma and epsilon chains, while a peripheral stalk is formed by the delta, b and b' chains.

It localises to the plastid. The protein resides in the chloroplast thylakoid membrane. Its function is as follows. F(1)F(0) ATP synthase produces ATP from ADP in the presence of a proton or sodium gradient. F-type ATPases consist of two structural domains, F(1) containing the extramembraneous catalytic core and F(0) containing the membrane proton channel, linked together by a central stalk and a peripheral stalk. During catalysis, ATP synthesis in the catalytic domain of F(1) is coupled via a rotary mechanism of the central stalk subunits to proton translocation. Component of the F(0) channel, it forms part of the peripheral stalk, linking F(1) to F(0). The chain is ATP synthase subunit b, chloroplastic from Thalassiosira pseudonana (Marine diatom).